A 431-amino-acid chain; its full sequence is F-box/kelch-repeat protein At4g19930 (431 aa).

Positions His-37–Leu-83 constitute an F-box domain. Kelch repeat units follow at residues Leu-143 to Lys-189 and Trp-227 to Val-275.

This is F-box/kelch-repeat protein At4g19930 from Arabidopsis thaliana (Mouse-ear cress).